The chain runs to 785 residues: MEQRVLKTLEYDKIVALLIDKASCTYGKEKASELIPFLRLDEVINAQQGTEQAATVLRLKGSVPLGGIRDIRGPVQRARLNAMLAPMELLDIASTVMAGRRLKTFLLDMCDDHELPLLQQQAERIEGLRELETEIRRCVDENGDILDSASLELRQVRQEIRQLESRIREKLDQMTRSSTYQKMLMENIVTIRGDRFVIPVKQEYRSVFGGIVHDQSASGATLFIEPEVIVEMNNKLRELRLREEREVERILYVLTEQVSFAVEALVENTEALTELDFMFAKAQLAWSMKAICPRINDRGYVNMRKARHPLIPREVVVPVDVELGGEYQAIVVTGPNTGGKTVSLKTIGLLSLMTMAGLHIPAEEESEMTVFSSIFADIGDEQSIEQSLSTFSSHMTNIIQILAKMDDKSLVLFDELGAGTDPTEGAALAMSIIDHVIDSGARLVATTHYSELKAYAYDRPEVINASVEFDVQTLRPTYRLLIGVPGRSNAFAIARRLGLPEHIIDVARGSISEEDNQVESMIASLERNRKSAEADRLAAKAARQEAEELRTQLEEERAQFAEEKNKRMERAEDEARIAVQLAKEEAETIIRELREMMAEGMEIKEHRLIDAKKRLGNAVLELEKEKVKKPAKAVRATQIKVGDEVMVTSFGQKGTVLEKVNNEEFLVQIGIMKMKVKRDDMHVQNSIQQKPQAAPYTSVKRRSDNIKMDLDLRGYNVEDSIREIDQFLDDALLAGLHSVSIIHGHGTGVLRKGVHEYLRSHRNVKSFRLGGQGEGGVGATIAELK.

Residue 334-341 (GPNTGGKT) coordinates ATP. Positions 710-785 (LDLRGYNVED…GVGATIAELK (76 aa)) constitute a Smr domain.

It belongs to the DNA mismatch repair MutS family. MutS2 subfamily. As to quaternary structure, homodimer. Binds to stalled ribosomes, contacting rRNA.

In terms of biological role, endonuclease that is involved in the suppression of homologous recombination and thus may have a key role in the control of bacterial genetic diversity. Its function is as follows. Acts as a ribosome collision sensor, splitting the ribosome into its 2 subunits. Detects stalled/collided 70S ribosomes which it binds and splits by an ATP-hydrolysis driven conformational change. Acts upstream of the ribosome quality control system (RQC), a ribosome-associated complex that mediates the extraction of incompletely synthesized nascent chains from stalled ribosomes and their subsequent degradation. Probably generates substrates for RQC. The sequence is that of Endonuclease MutS2 from Brevibacillus brevis (strain 47 / JCM 6285 / NBRC 100599).